Reading from the N-terminus, the 25-residue chain is Gastrin-releasing peptide (25 aa).

Met25 carries the post-translational modification Methionine amide.

Belongs to the bombesin/neuromedin-B/ranatensin family.

It is found in the secreted. Its subcellular location is the cytoplasmic vesicle. The protein resides in the secretory vesicle lumen. Its function is as follows. Stimulates the release of gastrin and other gastrointestinal hormones. The protein is Gastrin-releasing peptide (grp) of Scyliorhinus canicula (Small-spotted catshark).